Consider the following 47-residue polypeptide: Defensin-like protein 1 (47 aa).

Cystine bridges form between C5/C47, C16/C36, C22/C43, and C26/C45.

Belongs to the DEFL family.

Fabatins have antibacterial activity against Gram-positive and Gram-negative bacteria. High activity against P.aeruginosa. No activity against S.cerevisiae and C.albicans. The protein is Defensin-like protein 1 of Vicia faba (Broad bean).